The chain runs to 37 residues: Large ribosomal subunit protein bL36 (37 aa).

This sequence belongs to the bacterial ribosomal protein bL36 family.

This chain is Large ribosomal subunit protein bL36, found in Prochlorococcus marinus (strain MIT 9303).